Consider the following 352-residue polypeptide: DNA-directed RNA polymerase subunit alpha (352 aa).

The alpha N-terminal domain (alpha-NTD) stretch occupies residues 1-226; the sequence is MLISQRPTLT…ELFGLARELN (226 aa). Residues 243–352 form an alpha C-terminal domain (alpha-CTD) region; the sequence is HIASFGLPIE…EQDYAETEQL (110 aa). Positions 324 to 352 are disordered; the sequence is DASTGTWSDSGTFSDNDGGEQDYAETEQL. The segment covering 326–338 has biased composition (polar residues); sequence STGTWSDSGTFSD. The segment covering 340–352 has biased composition (acidic residues); the sequence is DGGEQDYAETEQL.

The protein belongs to the RNA polymerase alpha chain family. As to quaternary structure, homodimer. The RNAP catalytic core consists of 2 alpha, 1 beta, 1 beta' and 1 omega subunit. When a sigma factor is associated with the core the holoenzyme is formed, which can initiate transcription.

It carries out the reaction RNA(n) + a ribonucleoside 5'-triphosphate = RNA(n+1) + diphosphate. In terms of biological role, DNA-dependent RNA polymerase catalyzes the transcription of DNA into RNA using the four ribonucleoside triphosphates as substrates. The polypeptide is DNA-directed RNA polymerase subunit alpha (Nocardia farcinica (strain IFM 10152)).